Here is a 352-residue protein sequence, read N- to C-terminus: Thymidine kinase (352 aa).

Residue 26–33 (GSMGIGKT) coordinates ATP. Glu-54 acts as the Proton acceptor in catalysis. Gln-95 is a binding site for substrate. Arg-185 is an ATP binding site. Substrate is bound at residue Arg-191.

The protein belongs to the herpesviridae thymidine kinase family. As to quaternary structure, homodimer.

The enzyme catalyses thymidine + ATP = dTMP + ADP + H(+). Functionally, catalyzes the transfer of the gamma-phospho group of ATP to thymidine to generate dTMP in the salvage pathway of pyrimidine synthesis. The dTMP serves as a substrate for DNA polymerase during viral DNA replication. Allows the virus to be reactivated and to grow in non-proliferative cells lacking a high concentration of phosphorylated nucleic acid precursors. The polypeptide is Thymidine kinase (Gallid herpesvirus 2 (strain Chicken/Md5/ATCC VR-987) (GaHV-2)).